Consider the following 323-residue polypeptide: uncharacterized protein (323 aa).

It belongs to the glycosyltransferase 2 family.

This is an uncharacterized protein from Haemophilus influenzae (strain ATCC 51907 / DSM 11121 / KW20 / Rd).